The chain runs to 300 residues: Free fatty acid receptor 1 (300 aa).

Residues 1–8 (MDLPPQLS) are Extracellular-facing. A helical transmembrane segment spans residues 9-31 (FALYVAAFALGFPLNVLAIRGAR). Residues 32-41 (AHARRRLTPS) are Cytoplasmic-facing. The helical transmembrane segment at 42 to 64 (LVYALNLGCSDLLLTVSLPLKAV) threads the bilayer. Residues 65–79 (EALASGAWPLPASLC) are Extracellular-facing. A disulfide bridge links Cys79 with Cys170. Residues 80 to 101 (PVFGVAHFAPLYAGGGFLAALS) traverse the membrane as a helical segment. Topologically, residues 102-121 (AGRYLGAAFPLGYQAFRRPC) are cytoplasmic. Residues 122-142 (YSWGVCAAIWALVLCHLGLVF) traverse the membrane as a helical segment. Residues 143-178 (VLEAPGGWLDHSNTSLGINTPVNGSPVCLEAWDPAS) are Extracellular-facing. A glycan (N-linked (GlcNAc...) asparagine) is linked at Asn155. A helical transmembrane segment spans residues 179–200 (AGPARFSLSLLLFFLPLAITAF). Residues 201–223 (CYVGCLRALAHSGLTHRRKLRAA) are Cytoplasmic-facing. A helical membrane pass occupies residues 224–248 (WVAGGALLTLLLCVGPYNASNVASF). The Extracellular portion of the chain corresponds to 249-256 (LNPNLGGS). Residues 257 to 279 (WRKLGLITGAWSVVLNPLVTGYL) form a helical membrane-spanning segment. Over 280–300 (GRGPGLKTVCAARTQGSTSQK) the chain is Cytoplasmic.

The protein belongs to the G-protein coupled receptor 1 family.

The protein resides in the cell membrane. Functionally, G-protein coupled receptor for medium and long chain saturated and unsaturated fatty acids that plays an important role in glucose homeostasis. Fatty acid binding increases glucose-stimulated insulin secretion, and may also enhance the secretion of glucagon-like peptide 1 (GLP-1). May also play a role in bone homeostasis; receptor signaling activates pathways that inhibit osteoclast differentiation. Ligand binding leads to a conformation change that triggers signaling via G-proteins that activate phospholipase C, leading to an increase of the intracellular calcium concentration. Seems to act through a G(q) and G(i)-mediated pathway. Mediates the anti-inflammatory effects of omega-3 polyunsaturated fatty acids (PUFAs) via inhibition of NLRP3 inflammasome activation. The chain is Free fatty acid receptor 1 (FFAR1) from Macaca fascicularis (Crab-eating macaque).